The primary structure comprises 452 residues: Glycine receptor subunit alpha-2 (452 aa).

Positions methionine 1–cysteine 27 are cleaved as a signal peptide. Residues lysine 28–tyrosine 256 lie on the Extracellular side of the membrane. N-linked (GlcNAc...) asparagine glycosylation occurs at asparagine 72. Arginine 99 contacts glycine. A strychnine-binding site is contributed by arginine 99. A glycan (N-linked (GlcNAc...) asparagine) is linked at asparagine 103. Serine 163 serves as a coordination point for glycine. A disulfide bond links cysteine 172 and cysteine 186. Zn(2+) contacts are provided by glutamate 226 and glutamate 228. Cysteine 232 and cysteine 243 form a disulfide bridge. Threonine 238 is a binding site for glycine. Histidine 249 provides a ligand contact to Zn(2+). A helical transmembrane segment spans residues tyrosine 257–isoleucine 278. The Cytoplasmic portion of the chain corresponds to asparagine 279 to alanine 283. A helical membrane pass occupies residues proline 284–serine 304. Over arginine 305–lysine 315 the chain is Extracellular. A helical membrane pass occupies residues alanine 316–alanine 336. Over alanine 337–threonine 420 the chain is Cytoplasmic. A helical transmembrane segment spans residues isoleucine 421–tyrosine 441. Residues lysine 442–lysine 452 lie on the Extracellular side of the membrane.

This sequence belongs to the ligand-gated ion channel (TC 1.A.9) family. Glycine receptor (TC 1.A.9.3) subfamily. GLRA2 sub-subfamily. In terms of assembly, interacts with GLRB. Heteropentamer composed of GLRA2 and GLRB. Functional GLRB-GLRA2 heteropentamers contain four GLRA2 subunits and one GLRB subunit, although alternative subunit composition cannot be excluded. Homopentamer (in vitro). Both homopentamers and heteropentamers form functional ion channels, but their characteristics are subtly different.

The protein resides in the postsynaptic cell membrane. Its subcellular location is the synapse. The protein localises to the cell membrane. It localises to the cell projection. It carries out the reaction chloride(in) = chloride(out). With respect to regulation, channel opening is triggered by extracellular glycine. Channel opening is also triggered by taurine and beta-alanine. Inhibited by strychnine. Inhibited by picrotoxin. Channel activity is potentiated by 10-100 uM Zn(2+). Channel activity is marginally increased by 50 mM ethanol; it is strongly increased by a combination of 0.5 uM Zn(2+) and 50 mM ethanol. Channel activity is inhibited by 100-1000 uM Zn(2+). In terms of biological role, subunit of heteromeric glycine-gated chloride channels. Plays a role in synaptic plasticity. Contributes to the generation of inhibitory postsynaptic currents, and is involved in the down-regulation of neuronal excitability. Plays a role in cellular responses to ethanol. The protein is Glycine receptor subunit alpha-2 of Homo sapiens (Human).